The primary structure comprises 99 residues: UPF0473 protein LEUM_0559 (99 aa).

The protein belongs to the UPF0473 family.

This chain is UPF0473 protein LEUM_0559, found in Leuconostoc mesenteroides subsp. mesenteroides (strain ATCC 8293 / DSM 20343 / BCRC 11652 / CCM 1803 / JCM 6124 / NCDO 523 / NBRC 100496 / NCIMB 8023 / NCTC 12954 / NRRL B-1118 / 37Y).